The primary structure comprises 331 residues: Glycine betaine/proline betaine-binding periplasmic protein (331 aa).

Residues 1–21 (MRHTVIFASAFATLVTASAFA) form the signal peptide. Substrate is bound by residues Trp86, His90, and 161-163 (WGC). An intrachain disulfide couples Cys157 to Cys163.

As to quaternary structure, the complex is composed of two ATP-binding proteins (ProV), two transmembrane proteins (ProW) and a solute-binding protein (ProX).

Its subcellular location is the periplasm. Its function is as follows. Part of the ProU ABC transporter complex involved in glycine betaine and proline betaine uptake. Binds glycine betaine and proline betaine with high affinity. The sequence is that of Glycine betaine/proline betaine-binding periplasmic protein (proX) from Salmonella typhimurium (strain LT2 / SGSC1412 / ATCC 700720).